A 236-amino-acid polypeptide reads, in one-letter code: Small ribosomal subunit protein uS2c (236 aa).

It belongs to the universal ribosomal protein uS2 family.

The protein resides in the plastid. It is found in the chloroplast. The protein is Small ribosomal subunit protein uS2c (rps2) of Aethionema grandiflorum (Persian stone-cress).